The sequence spans 203 residues: Acid phosphatase (203 aa).

The Tele-phosphohistidine intermediate role is filled by His13. The active-site Proton donor/acceptor is Glu85.

This sequence belongs to the phosphoglycerate mutase family. As to quaternary structure, homodimer.

The catalysed reaction is a phosphate monoester + H2O = an alcohol + phosphate. It carries out the reaction beta-D-fructose 1,6-bisphosphate + H2O = beta-D-fructose 6-phosphate + phosphate. It participates in carbohydrate biosynthesis; gluconeogenesis. In contrast to classical FBPases, is resistant to inhibition by lithium. Functionally, phosphatase with a broad specificity. Can dephosphorylate a variety of substrates including phosphorylated sugars like fructose-6-phosphate (F6P). Is able to function in vivo as a fructose-1,6-bisphosphatase (FBPase) and to maintain gluconeogenesis when the classical FBPase GlpX is absent. Shows negligible phosphoglycerate mutase activity. Has no phosphatase activity against 3-phosphoglycerate, 2,3-bisphosphoglycerate, or hydrophobic substrates such as alpha-napthyl phosphate. In Mycobacterium tuberculosis (strain ATCC 25618 / H37Rv), this protein is Acid phosphatase.